Consider the following 515-residue polypeptide: MTFILTETSAGYAVLKAKDKKIYKSESILEELSTPELVTSQFKVKGFSKFDSAASALEEVNAIVDGRVSDKLAALLNEFKDEKKSALVVADPKLGNAINKLDLPFDVVAESASLDLFRAIRENLPSLLPGLTEKDLATMSLGLAHSLGRHKLKFSPDKVDTMIVQAIALLDDLDKELNTYAMRIKEWYGWHFPEMAKIVADNIAYARVIKTMGYRSNASETDLSEVLPEEVEAALKVAAEVSMGTEITEFDLENIQCLADQVIDFAEYREQLSNYLNARMAAIAPNLTALVGELVGARLIAHSGSLVNLAKAPASTVQILGAEKALFRALKTKHDTPKYGIIYHASLIGQASGKNKGKIARMLAAKASVSMRYDAFAEEREDVPILGIDNRIKVENRLRQLEGKEIVGTVRPDVNKIEHKKVDLSTGKQYNADADTVGNTTAGADSDDEDSDSEEEVKEKKAKKEKKEKKDKKEKKDKKDKKEKKDKKEKKEKKDKKRKREDDDDEPKKEKKSKK.

Positions 283 to 403 (IAPNLTALVG…VENRLRQLEG (121 aa)) constitute a Nop domain. Residues 428 to 515 (KQYNADADTV…EPKKEKKSKK (88 aa)) are disordered. Acidic residues predominate over residues 445-456 (DSDDEDSDSEEE). Over residues 460–499 (KKAKKEKKEKKDKKEKKDKKDKKEKKDKKEKKEKKDKKRK) the composition is skewed to basic residues.

It belongs to the NOP5/NOP56 family.

It is found in the nucleus. It localises to the nucleolus. Required for pre-18S rRNA processing. May bind microtubules. In Yarrowia lipolytica (strain CLIB 122 / E 150) (Yeast), this protein is Nucleolar protein 58 (NOP58).